Here is an 878-residue protein sequence, read N- to C-terminus: NUT family member 2A (878 aa).

Disordered stretches follow at residues 273 to 324 (WSQG…DDSC), 417 to 566 (QKSQ…LSYT), 627 to 757 (KEKQ…EEEE), and 775 to 878 (WLPQ…RCSQ). Composition is skewed to pro residues over residues 278-288 (PLPPPPPPAAQ) and 427-444 (CLPPPATPRLEPRGPPAP). Residues 476–487 (TKARRPPPRPHR) are compositionally biased toward basic residues. Over residues 537–551 (EPEKQREEGEVKQPQ) the composition is skewed to basic and acidic residues.

It belongs to the NUT family.

The protein is NUT family member 2A (NUTM2A) of Homo sapiens (Human).